The primary structure comprises 346 residues: Biotin synthase (346 aa).

A Radical SAM core domain is found at 38-256; sequence RQVQVSTLLS…IAVARIMMPT (219 aa). Residues Cys-53, Cys-57, and Cys-60 each coordinate [4Fe-4S] cluster. Residues Cys-97, Cys-128, Cys-188, and Arg-260 each coordinate [2Fe-2S] cluster.

Belongs to the radical SAM superfamily. Biotin synthase family. As to quaternary structure, homodimer. It depends on [4Fe-4S] cluster as a cofactor. Requires [2Fe-2S] cluster as cofactor.

It carries out the reaction (4R,5S)-dethiobiotin + (sulfur carrier)-SH + 2 reduced [2Fe-2S]-[ferredoxin] + 2 S-adenosyl-L-methionine = (sulfur carrier)-H + biotin + 2 5'-deoxyadenosine + 2 L-methionine + 2 oxidized [2Fe-2S]-[ferredoxin]. It participates in cofactor biosynthesis; biotin biosynthesis; biotin from 7,8-diaminononanoate: step 2/2. Its function is as follows. Catalyzes the conversion of dethiobiotin (DTB) to biotin by the insertion of a sulfur atom into dethiobiotin via a radical-based mechanism. The chain is Biotin synthase from Shigella flexneri serotype 5b (strain 8401).